Reading from the N-terminus, the 359-residue chain is Peptide chain release factor 1 (359 aa).

Gln233 carries the post-translational modification N5-methylglutamine.

Belongs to the prokaryotic/mitochondrial release factor family. Methylated by PrmC. Methylation increases the termination efficiency of RF1.

The protein resides in the cytoplasm. Functionally, peptide chain release factor 1 directs the termination of translation in response to the peptide chain termination codons UAG and UAA. The chain is Peptide chain release factor 1 from Ruminiclostridium cellulolyticum (strain ATCC 35319 / DSM 5812 / JCM 6584 / H10) (Clostridium cellulolyticum).